Consider the following 65-residue polypeptide: Orally active insecticidal peptide-3 (65 aa).

Residues 1–21 (MKTSVLFAILGLALLFCLSFG) form the signal peptide. The propeptide occupies 22-29 (VELEETGR). Disulfide bonds link Cys-31-Cys-46, Cys-38-Cys-51, and Cys-45-Cys-58. Pro-62 bears the Proline amide mark.

It belongs to the neurotoxin 10 (Hwtx-1) family. 46 (Jztx-7/10/12) subfamily. In terms of tissue distribution, expressed by the venom gland.

Its subcellular location is the secreted. Probable ion channel inhibitor. Shows insecticidal activity when injected into mealworms. This chain is Orally active insecticidal peptide-3, found in Selenotypus plumipes (Australian featherleg tarantula).